Reading from the N-terminus, the 349-residue chain is Ion-translocating oxidoreductase complex subunit D (349 aa).

3 helical membrane passes run 36–56 (CAFF…VALS), 77–99 (SAML…WMIV), and 124–144 (AMAA…TWIA). T185 carries the FMN phosphoryl threonine modification. Helical transmembrane passes span 212-232 (STGV…IVLL), 239-259 (WHIS…GFLL), 265-285 (ASPL…FIAT), 291-311 (ATSP…VYII), and 315-335 (GGYP…APFI).

This sequence belongs to the NqrB/RnfD family. The complex is composed of six subunits: RnfA, RnfB, RnfC, RnfD, RnfE and RnfG. The cofactor is FMN.

The protein resides in the cell inner membrane. Functionally, part of a membrane-bound complex that couples electron transfer with translocation of ions across the membrane. This is Ion-translocating oxidoreductase complex subunit D from Shewanella oneidensis (strain ATCC 700550 / JCM 31522 / CIP 106686 / LMG 19005 / NCIMB 14063 / MR-1).